Consider the following 120-residue polypeptide: Large ribosomal subunit protein uL18 (120 aa).

This sequence belongs to the universal ribosomal protein uL18 family. Part of the 50S ribosomal subunit; part of the 5S rRNA/L5/L18/L25 subcomplex. Contacts the 5S and 23S rRNAs.

Its function is as follows. This is one of the proteins that bind and probably mediate the attachment of the 5S RNA into the large ribosomal subunit, where it forms part of the central protuberance. This is Large ribosomal subunit protein uL18 from Treponema denticola (strain ATCC 35405 / DSM 14222 / CIP 103919 / JCM 8153 / KCTC 15104).